The chain runs to 188 residues: Probable RNA-binding protein 18 (188 aa).

In terms of domain architecture, RRM spans 23–104 (HRLWIGNIDP…KKLVVRWAHA (82 aa)). A disordered region spans residues 151-188 (EENPDDYSGPSAYTYNKPPDKREKRSQPYHKHFRKHRR). Basic residues predominate over residues 177–188 (QPYHKHFRKHRR).

The polypeptide is Probable RNA-binding protein 18 (rbm18) (Danio rerio (Zebrafish)).